Here is a 177-residue protein sequence, read N- to C-terminus: Myosin regulatory light chain 2 (177 aa).

The segment covering 1–16 (MSRKSGSRSSSKRSKK) has biased composition (basic residues). Positions 1-24 (MSRKSGSRSSSKRSKKSGGGSNVF) are disordered. IgE-binding epitope stretches follow at residues 13 to 30 (RSKK…FTQR), 22 to 48 (NVFD…DKDG), 49 to 66 (VIGK…GRIA), 58 to 90 (TFDE…LLNM), 79 to 99 (PAPI…TGES), and 118 to 141 (NIDC…QEAD). Residues 30-65 (RQVAEFKEGFQLMDRDKDGVIGKTDLRGTFDEIGRI) form the EF-hand 1 domain. The Ca(2+) site is built by aspartate 43, aspartate 45, aspartate 47, and aspartate 54. Residues 135–170 (FSSQEADDALDQMDIDDGGKIDVQGVIQMLTAGGGD) form the EF-hand 2 domain.

Myosin is a hexamer of 2 heavy chains and 4 light chains. As to expression, expressed in tail muscle (at protein level).

This Penaeus vannamei (Whiteleg shrimp) protein is Myosin regulatory light chain 2.